The chain runs to 423 residues: UPF0229 protein PSEEN0423 (423 aa).

The segment at 85–107 (GEHIARPQGGGGGGGRGKAGNSG) is disordered. The span at 92–107 (QGGGGGGGRGKAGNSG) shows a compositional bias: gly residues.

This sequence belongs to the UPF0229 family.

This chain is UPF0229 protein PSEEN0423, found in Pseudomonas entomophila (strain L48).